The primary structure comprises 104 residues: Flagellar hook-basal body complex protein FliE (104 aa).

The protein belongs to the FliE family.

It localises to the bacterial flagellum basal body. This is Flagellar hook-basal body complex protein FliE from Escherichia coli (strain 55989 / EAEC).